The chain runs to 457 residues: UDP-glycosyltransferase 708C1 (457 aa).

Gly31 is a UDP-alpha-D-glucose binding site. The Proton acceptor role is filled by His32. His32 contacts an anthocyanidin. UDP-alpha-D-glucose is bound at residue Thr34. Asn94 lines the an anthocyanidin pocket. The Charge relay role is filled by Asp129. Thr150 contacts UDP-alpha-D-glucose. The segment at 279 to 280 is UDP; the sequence is NR. UDP-alpha-D-glucose-binding residues include Val341, Gln343, His358, Trp361, Asn362, Ser363, and Glu366. Gly381 provides a ligand contact to an anthocyanidin. UDP-alpha-D-glucose is bound by residues Asp382 and Gln383.

The protein belongs to the UDP-glycosyltransferase family. As to expression, expressed in cotyledons. Not detected in flowers, leaves, roots and hypocotyls.

It catalyses the reaction a 3'-hydro-2'-hydroxy-beta-oxodihydrochalcone + UDP-alpha-D-glucose = a 3'-(beta-D-glucopyranosyl)-2'-hydroxy-beta-oxodihydrochalcone + UDP + H(+). In terms of biological role, UDP-glucose-dependent glucosyltransferase catalyzing the C-glucosylation of 2-hydroxyflavanones (2-hydroxynaringenin, 2-hydroxyeriodictyol and 2-hydroxypinocembrin) and phloretin. No activity with flavanones, flavones or flavonols. Exhibits C-glycosylation activity toward 2',4',6'-trihydroxyacetophenone and phloretin using UDP-glucose as sugar donor. Can use UDP-galactose as sugar donor, but catalytic efficiency is 14-fold lower toward UDP-galactose than toward UDP-glucose. In Fagopyrum esculentum (Common buckwheat), this protein is UDP-glycosyltransferase 708C1.